A 376-amino-acid chain; its full sequence is UPF0754 membrane protein BLi01057/BL02871 (376 aa).

2 helical membrane passes run 1–21 and 356–376; these read MYVF…GAVT and YLGG…VILI.

The protein belongs to the UPF0754 family.

The protein resides in the cell membrane. The polypeptide is UPF0754 membrane protein BLi01057/BL02871 (Bacillus licheniformis (strain ATCC 14580 / DSM 13 / JCM 2505 / CCUG 7422 / NBRC 12200 / NCIMB 9375 / NCTC 10341 / NRRL NRS-1264 / Gibson 46)).